The sequence spans 440 residues: Thymidine phosphorylase (440 aa).

It belongs to the thymidine/pyrimidine-nucleoside phosphorylase family. Homodimer.

The enzyme catalyses thymidine + phosphate = 2-deoxy-alpha-D-ribose 1-phosphate + thymine. It participates in pyrimidine metabolism; dTMP biosynthesis via salvage pathway; dTMP from thymine: step 1/2. The enzymes which catalyze the reversible phosphorolysis of pyrimidine nucleosides are involved in the degradation of these compounds and in their utilization as carbon and energy sources, or in the rescue of pyrimidine bases for nucleotide synthesis. The sequence is that of Thymidine phosphorylase from Salmonella schwarzengrund (strain CVM19633).